A 423-amino-acid chain; its full sequence is Flavohemoprotein B (423 aa).

The Globin domain maps to 1–136; it reads MLSQKSIQII…VAQAFMDAEE (136 aa). H83 is a heme b binding site. Catalysis depends on charge relay system residues Y93 and E135. The segment at 149–423 is reductase; it reads WKDTREFVVD…LRGVKNIIEN (275 aa). One can recognise an FAD-binding FR-type domain in the interval 150 to 268; that stretch reads KDTREFVVDR…SVPAGDFVVN (119 aa). Residues Y188 and 212–215 each bind FAD; that span reads RHYS. Position 281 to 286 (281 to 286) interacts with NADP(+); sequence GVGINP. 400 to 403 is a binding site for FAD; sequence LFGP.

It belongs to the globin family. Two-domain flavohemoproteins subfamily. This sequence in the C-terminal section; belongs to the flavoprotein pyridine nucleotide cytochrome reductase family. FAD is required as a cofactor. It depends on heme b as a cofactor.

It localises to the cytoplasm. The enzyme catalyses 2 nitric oxide + NADPH + 2 O2 = 2 nitrate + NADP(+) + H(+). It carries out the reaction 2 nitric oxide + NADH + 2 O2 = 2 nitrate + NAD(+) + H(+). Its function is as follows. Is involved in NO detoxification in an aerobic process, termed nitric oxide dioxygenase (NOD) reaction that utilizes O(2) and NAD(P)H to convert NO to nitrate, which protects the cell from various noxious nitrogen compounds. Therefore, plays a central role in the inducible response to nitrosative stress. In the presence of oxygen and NADH, it has NADH oxidase activity, which leads to the generation of superoxide and H(2)O(2). Under anaerobic conditions, it also exhibits nitric oxide reductase and FAD reductase activities. However, all these reactions are much lower than NOD activity. The protein is Flavohemoprotein B (fhbB) of Dictyostelium discoideum (Social amoeba).